We begin with the raw amino-acid sequence, 212 residues long: Translation initiation factor IF-3 (212 aa).

This sequence belongs to the IF-3 family. As to quaternary structure, monomer.

The protein localises to the cytoplasm. Its function is as follows. IF-3 binds to the 30S ribosomal subunit and shifts the equilibrium between 70S ribosomes and their 50S and 30S subunits in favor of the free subunits, thus enhancing the availability of 30S subunits on which protein synthesis initiation begins. The protein is Translation initiation factor IF-3 of Synechococcus sp. (strain CC9311).